Here is a 138-residue protein sequence, read N- to C-terminus: Cysteine desulfuration protein SufE (138 aa).

Cysteine 51 functions as the Cysteine persulfide intermediate in the catalytic mechanism.

This sequence belongs to the SufE family. Homodimer. Interacts with SufS.

It localises to the cytoplasm. It participates in cofactor biosynthesis; iron-sulfur cluster biosynthesis. Its function is as follows. Participates in cysteine desulfuration mediated by SufS. Cysteine desulfuration mobilizes sulfur from L-cysteine to yield L-alanine and constitutes an essential step in sulfur metabolism for biosynthesis of a variety of sulfur-containing biomolecules. Functions as a sulfur acceptor for SufS, by mediating the direct transfer of the sulfur atom from the S-sulfanylcysteine of SufS, an intermediate product of cysteine desulfuration process. In Escherichia coli O81 (strain ED1a), this protein is Cysteine desulfuration protein SufE.